The chain runs to 248 residues: Tyrosine recombinase XerD-like (248 aa).

The Core-binding (CB) domain maps to 1–72 (MKSYIEPFIA…TANQFLYYLY (72 aa)). One can recognise a Tyr recombinase domain in the interval 85–248 (DTMKVMRTEK…PVTLEKYYKS (164 aa)). Residues lysine 149 and arginine 213 contribute to the active site. Catalysis depends on tyrosine 245, which acts as the O-(3'-phospho-DNA)-tyrosine intermediate.

This sequence belongs to the 'phage' integrase family. XerD-like subfamily.

The protein localises to the cytoplasm. Its function is as follows. Putative tyrosine recombinase. Not involved in the cutting and rejoining of the recombining DNA molecules on dif(SL) site. This is Tyrosine recombinase XerD-like from Streptococcus pyogenes serotype M18 (strain MGAS8232).